Reading from the N-terminus, the 95-residue chain is MSLTLDEVRRIAALARLRLSPEEERTFAGQLSAILDHVAQLAELDVSGVEPMTHALAEGVPSRPDEVRPGLPPEEALANAPAREGTFFVVPRIIE.

The protein belongs to the GatC family. As to quaternary structure, heterotrimer of A, B and C subunits.

The enzyme catalyses L-glutamyl-tRNA(Gln) + L-glutamine + ATP + H2O = L-glutaminyl-tRNA(Gln) + L-glutamate + ADP + phosphate + H(+). The catalysed reaction is L-aspartyl-tRNA(Asn) + L-glutamine + ATP + H2O = L-asparaginyl-tRNA(Asn) + L-glutamate + ADP + phosphate + 2 H(+). Its function is as follows. Allows the formation of correctly charged Asn-tRNA(Asn) or Gln-tRNA(Gln) through the transamidation of misacylated Asp-tRNA(Asn) or Glu-tRNA(Gln) in organisms which lack either or both of asparaginyl-tRNA or glutaminyl-tRNA synthetases. The reaction takes place in the presence of glutamine and ATP through an activated phospho-Asp-tRNA(Asn) or phospho-Glu-tRNA(Gln). In Anaeromyxobacter sp. (strain Fw109-5), this protein is Aspartyl/glutamyl-tRNA(Asn/Gln) amidotransferase subunit C.